The primary structure comprises 258 residues: 6-carboxyhexanoate--CoA ligase (258 aa).

This sequence belongs to the BioW family. In terms of assembly, homodimer. It depends on Mg(2+) as a cofactor.

It carries out the reaction heptanedioate + ATP + CoA = 6-carboxyhexanoyl-CoA + AMP + diphosphate. The protein operates within metabolic intermediate metabolism; pimeloyl-CoA biosynthesis; pimeloyl-CoA from pimelate: step 1/1. Functionally, catalyzes the transformation of pimelate into pimeloyl-CoA with concomitant hydrolysis of ATP to AMP. This chain is 6-carboxyhexanoate--CoA ligase, found in Bacillus atrophaeus (strain 1942).